Here is a 248-residue protein sequence, read N- to C-terminus: Phosphatidylserine decarboxylase proenzyme (248 aa).

S206 serves as the catalytic Schiff-base intermediate with substrate; via pyruvic acid. S206 carries the post-translational modification Pyruvic acid (Ser); by autocatalysis.

The protein belongs to the phosphatidylserine decarboxylase family. PSD-A subfamily. In terms of assembly, heterodimer of a large membrane-associated beta subunit and a small pyruvoyl-containing alpha subunit. Pyruvate serves as cofactor. In terms of processing, is synthesized initially as an inactive proenzyme. Formation of the active enzyme involves a self-maturation process in which the active site pyruvoyl group is generated from an internal serine residue via an autocatalytic post-translational modification. Two non-identical subunits are generated from the proenzyme in this reaction, and the pyruvate is formed at the N-terminus of the alpha chain, which is derived from the carboxyl end of the proenzyme. The post-translation cleavage follows an unusual pathway, termed non-hydrolytic serinolysis, in which the side chain hydroxyl group of the serine supplies its oxygen atom to form the C-terminus of the beta chain, while the remainder of the serine residue undergoes an oxidative deamination to produce ammonia and the pyruvoyl prosthetic group on the alpha chain.

It localises to the cell membrane. It carries out the reaction a 1,2-diacyl-sn-glycero-3-phospho-L-serine + H(+) = a 1,2-diacyl-sn-glycero-3-phosphoethanolamine + CO2. Its pathway is phospholipid metabolism; phosphatidylethanolamine biosynthesis; phosphatidylethanolamine from CDP-diacylglycerol: step 2/2. In terms of biological role, catalyzes the formation of phosphatidylethanolamine (PtdEtn) from phosphatidylserine (PtdSer). The chain is Phosphatidylserine decarboxylase proenzyme from Nitrobacter hamburgensis (strain DSM 10229 / NCIMB 13809 / X14).